Here is a 104-residue protein sequence, read N- to C-terminus: Large ribosomal subunit protein uL24 (104 aa).

This sequence belongs to the universal ribosomal protein uL24 family. Part of the 50S ribosomal subunit.

Functionally, one of two assembly initiator proteins, it binds directly to the 5'-end of the 23S rRNA, where it nucleates assembly of the 50S subunit. In terms of biological role, one of the proteins that surrounds the polypeptide exit tunnel on the outside of the subunit. This Baumannia cicadellinicola subsp. Homalodisca coagulata protein is Large ribosomal subunit protein uL24.